Here is a 288-residue protein sequence, read N- to C-terminus: Co-chaperone protein DjlA (288 aa).

The Periplasmic segment spans residues 1 to 6 (MNFIGK). The helical transmembrane segment at 7-30 (ILGFIIGYRFGGLFGGIAGLILGH) threads the bilayer. Over 31-288 (IADKKLYELG…DLICKVKGWK (258 aa)) the chain is Cytoplasmic. The 67-residue stretch at 222-288 (DAYKVLGVNA…DLICKVKGWK (67 aa)) folds into the J domain.

As to quaternary structure, homodimer.

It is found in the cell inner membrane. Functionally, regulatory DnaK co-chaperone. Direct interaction between DnaK and DjlA is needed for the induction of the wcaABCDE operon, involved in the synthesis of a colanic acid polysaccharide capsule, possibly through activation of the RcsB/RcsC phosphotransfer signaling pathway. The colanic acid capsule may help the bacterium survive conditions outside the host. The chain is Co-chaperone protein DjlA from Mannheimia succiniciproducens (strain KCTC 0769BP / MBEL55E).